Here is a 373-residue protein sequence, read N- to C-terminus: Histidinol-phosphate aminotransferase (373 aa).

At Lys-233 the chain carries N6-(pyridoxal phosphate)lysine.

Belongs to the class-II pyridoxal-phosphate-dependent aminotransferase family. Histidinol-phosphate aminotransferase subfamily. In terms of assembly, homodimer. Requires pyridoxal 5'-phosphate as cofactor.

It catalyses the reaction L-histidinol phosphate + 2-oxoglutarate = 3-(imidazol-4-yl)-2-oxopropyl phosphate + L-glutamate. Its pathway is amino-acid biosynthesis; L-histidine biosynthesis; L-histidine from 5-phospho-alpha-D-ribose 1-diphosphate: step 7/9. The chain is Histidinol-phosphate aminotransferase from Nitratidesulfovibrio vulgaris (strain DP4) (Desulfovibrio vulgaris).